Consider the following 194-residue polypeptide: Fe/S biogenesis protein NfuA (194 aa).

Cys-152 and Cys-155 together coordinate [4Fe-4S] cluster.

The protein belongs to the NfuA family. As to quaternary structure, homodimer. Requires [4Fe-4S] cluster as cofactor.

In terms of biological role, involved in iron-sulfur cluster biogenesis. Binds a 4Fe-4S cluster, can transfer this cluster to apoproteins, and thereby intervenes in the maturation of Fe/S proteins. Could also act as a scaffold/chaperone for damaged Fe/S proteins. The sequence is that of Fe/S biogenesis protein NfuA from Stutzerimonas stutzeri (strain A1501) (Pseudomonas stutzeri).